Here is a 128-residue protein sequence, read N- to C-terminus: Ribosome-binding factor A (128 aa).

This sequence belongs to the RbfA family. As to quaternary structure, monomer. Binds 30S ribosomal subunits, but not 50S ribosomal subunits or 70S ribosomes.

The protein localises to the cytoplasm. One of several proteins that assist in the late maturation steps of the functional core of the 30S ribosomal subunit. Associates with free 30S ribosomal subunits (but not with 30S subunits that are part of 70S ribosomes or polysomes). Required for efficient processing of 16S rRNA. May interact with the 5'-terminal helix region of 16S rRNA. The chain is Ribosome-binding factor A from Saccharophagus degradans (strain 2-40 / ATCC 43961 / DSM 17024).